A 557-amino-acid chain; its full sequence is Glypican-1 (557 aa).

An N-terminal signal peptide occupies residues 1 to 23 (MELRTRGWWLLCAAAALVVCARG). Intrachain disulfides connect C32–C68, C62–C255, C69–C258, C190–C342, C245–C278, C267–C414, and C271–C400. Residues N79 and N116 are each glycosylated (N-linked (GlcNAc...) asparagine). The disordered stretch occupies residues 477 to 531 (FQDASDDGSGSGSGGGCPDDTCGRRVSKKSSSSRTPLTHALPGLSEQEGQKTSAA). O-linked (Xyl...) (heparan sulfate) serine glycosylation is found at S485, S487, and S489. S529 carries the GPI-anchor amidated serine lipid modification. Positions 530–557 (AATCPEPHSFFLLFLVTLVLAAARPRWR) are cleaved as a propeptide — removed in mature form.

The protein belongs to the glypican family. In terms of processing, S-nitrosylated in a Cu(2+)-dependent manner. Nitric acid (NO) is released from the nitrosylated cysteines by ascorbate or by some other reducing agent, in a Cu(2+) or Zn(2+) dependent manner. This free nitric oxide is then capable of cleaving the heparan sulfate side chains. N- and O-glycosylated. N-glycosylation is mainly of the complex type containing sialic acid. O-glycosylated with heparan sulfate. The heparan sulfate chains can be cleaved either by the action of heparanase or, degraded by a deaminative process that uses nitric oxide (NO) released from the S-nitrosylated cysteines. This process is triggered by ascorbate, or by some other reducing agent, in a Cu(2+)- or Zn(2+) dependent manner. Cu(2+) ions are provided by ceruloproteins such as APP, PRNP or CP which associate with GCP1 in intracellular compartments or lipid rafts. Post-translationally, this cell-associated glypican is further processed to give rise to a medium-released species.

It localises to the cell membrane. The protein localises to the endosome. It is found in the secreted. Its subcellular location is the extracellular space. Cell surface proteoglycan that bears heparan sulfate. Binds, via the heparan sulfate side chains, alpha-4 (V) collagen and participates in Schwann cell myelination. May act as a catalyst in increasing the rate of conversion of prion protein PRPN(C) to PRNP(Sc) via associating (via the heparan sulfate side chains) with both forms of PRPN, targeting them to lipid rafts and facilitating their interaction. Required for proper skeletal muscle differentiation by sequestering FGF2 in lipid rafts preventing its binding to receptors (FGFRs) and inhibiting the FGF-mediated signaling. Binds Cu(2+) or Zn(2+) ions. The polypeptide is Glypican-1 (Gpc1) (Mus musculus (Mouse)).